A 249-amino-acid chain; its full sequence is Metal-staphylopine import system ATP-binding protein CntF (249 aa).

The 243-residue stretch at 2 to 244 (IKIKDVEKSY…DNAYTRELIE (243 aa)) folds into the ABC transporter domain. 42–49 (GESGSGKS) contacts ATP.

This sequence belongs to the ABC transporter superfamily. As to quaternary structure, the complex is composed of two ATP-binding proteins (CntD and CntF), two transmembrane proteins (CntB and CntC) and a solute-binding protein (CntA).

It is found in the cell membrane. With respect to regulation, nickel/cobalt import is reduced in the presence of zinc. Part of the ABC transporter complex CntABCDF (Opp1) involved in the uptake of metal in complex with the metallophore staphylopine (StP). Involved in the import of divalent metals ions such as nickel, cobalt and zinc. Probably responsible for energy coupling to the transport system. Plays a major role in nickel/cobalt import in zinc-depleted conditions. Contributes to virulence. Required for full urease activity in vitro. The protein is Metal-staphylopine import system ATP-binding protein CntF of Staphylococcus aureus (strain NCTC 8325 / PS 47).